A 468-amino-acid polypeptide reads, in one-letter code: Arginine biosynthesis bifunctional protein ArgJ, mitochondrial (468 aa).

A mitochondrion-targeting transit peptide spans 1 to 23 (MVGFSRCALSQLRQPKAQLVRSF). Substrate contacts are provided by Thr-198, Lys-227, Thr-238, Glu-324, Asn-463, and Thr-468. Catalysis depends on Thr-238, which acts as the Nucleophile.

This sequence belongs to the ArgJ family. Heterodimer of an alpha and a beta chain. The alpha and beta chains are autoproteolytically processed from a single precursor protein within the mitochondrion.

It is found in the mitochondrion matrix. The enzyme catalyses N(2)-acetyl-L-ornithine + L-glutamate = N-acetyl-L-glutamate + L-ornithine. It catalyses the reaction L-glutamate + acetyl-CoA = N-acetyl-L-glutamate + CoA + H(+). It functions in the pathway amino-acid biosynthesis; L-arginine biosynthesis; L-ornithine and N-acetyl-L-glutamate from L-glutamate and N(2)-acetyl-L-ornithine (cyclic): step 1/1. It participates in amino-acid biosynthesis; L-arginine biosynthesis; N(2)-acetyl-L-ornithine from L-glutamate: step 1/4. In terms of biological role, catalyzes two activities which are involved in the cyclic version of arginine biosynthesis: the synthesis of acetylglutamate from glutamate and acetyl-CoA, and of ornithine by transacetylation between acetylornithine and glutamate. The sequence is that of Arginine biosynthesis bifunctional protein ArgJ, mitochondrial from Podospora anserina (strain S / ATCC MYA-4624 / DSM 980 / FGSC 10383) (Pleurage anserina).